Reading from the N-terminus, the 188-residue chain is NAD(P)H-quinone oxidoreductase subunit J (188 aa).

The protein belongs to the complex I 30 kDa subunit family. NDH-1 can be composed of about 15 different subunits; different subcomplexes with different compositions have been identified which probably have different functions.

The protein localises to the cellular thylakoid membrane. It catalyses the reaction a plastoquinone + NADH + (n+1) H(+)(in) = a plastoquinol + NAD(+) + n H(+)(out). The catalysed reaction is a plastoquinone + NADPH + (n+1) H(+)(in) = a plastoquinol + NADP(+) + n H(+)(out). NDH-1 shuttles electrons from an unknown electron donor, via FMN and iron-sulfur (Fe-S) centers, to quinones in the respiratory and/or the photosynthetic chain. The immediate electron acceptor for the enzyme in this species is believed to be plastoquinone. Couples the redox reaction to proton translocation, and thus conserves the redox energy in a proton gradient. Cyanobacterial NDH-1 also plays a role in inorganic carbon-concentration. In Parasynechococcus marenigrum (strain WH8102), this protein is NAD(P)H-quinone oxidoreductase subunit J.